Reading from the N-terminus, the 263-residue chain is MLLHPQFDPVAFSVGPLSVRWYGLMYLVAFVQFIFLGRYRIKTRPGFLSVEQLDDLLFYGMLGVILGGRLGQVLFYEPAYFLANPLEIFAVWKGGMSFHGGFLGVLVAMGLWTRKHHLNWFEVMDFVAPLVPLGLAAGRVGNFINGELWGRVADASLPWAMIFPQSGDMQPRHPSQLYHVGLEGLALFVILWWFTAKPRPRAAASGAFLIGYGAFRFITEYFREPDHGIFGQSYTISMGQWLSLPMILIGVAMVVFAYRKKSL.

Transmembrane regions (helical) follow at residues 17–37, 56–76, and 88–108; these read LSVR…IFLG, LLFY…VLFY, and IFAV…VLVA. R139 lines the a 1,2-diacyl-sn-glycero-3-phospho-(1'-sn-glycerol) pocket. 2 helical membrane-spanning segments follow: residues 176-196 and 236-256; these read QLYH…WFTA and ISMG…MVVF.

Belongs to the Lgt family.

The protein resides in the cell inner membrane. The catalysed reaction is L-cysteinyl-[prolipoprotein] + a 1,2-diacyl-sn-glycero-3-phospho-(1'-sn-glycerol) = an S-1,2-diacyl-sn-glyceryl-L-cysteinyl-[prolipoprotein] + sn-glycerol 1-phosphate + H(+). It participates in protein modification; lipoprotein biosynthesis (diacylglyceryl transfer). Catalyzes the transfer of the diacylglyceryl group from phosphatidylglycerol to the sulfhydryl group of the N-terminal cysteine of a prolipoprotein, the first step in the formation of mature lipoproteins. The chain is Phosphatidylglycerol--prolipoprotein diacylglyceryl transferase from Dechloromonas aromatica (strain RCB).